A 251-amino-acid chain; its full sequence is MVKRDAPWRLMAGTSKVSRSANFSPREGMGPKFNKAAAWVNRPMYRKPRIYRTMRGPDIPKGCEGPCKVQSYEQRHDISHLGKVMCISDVTRGNGITHRVGKRFCVKSVYILGKIWMDENIKLKNHTNSVMFWLVRDRRPYGTPMDFGQVFNMFDNEPSTATIKNDLRDRYQVMHRFYAKVTGGQYASNEQALVRRFWKVNNHVVYNHQEAGKYENHTENALLLYMACTHASNPVYATLKIRIYFYDSITN.

Positions K3–S20 match the Bipartite nuclear localization signal motif. The short motif at K35–R49 is the Nuclear localization signal element. A zinc finger spans residues C63–H80. Residues I96–M117 carry the Nuclear export signal motif. Residues R195–R242 carry the Bipartite nuclear localization signal motif.

The protein belongs to the geminiviridae capsid protein family. As to quaternary structure, homomultimer. Binds to single-stranded and double-stranded viral DNA. Interacts (via nuclear localization signals) with host importin alpha-1a.

The protein resides in the virion. It is found in the host nucleus. Functionally, encapsidates the viral DNA into characteristic twinned ('geminate') particles. Binds the genomic viral ssDNA and shuttles it into and out of the cell nucleus. The CP of bipartite geminiviruses is not required for cell-to-cell or systemic movement. The chain is Capsid protein from Squash leaf curl virus (SLCV).